The following is a 351-amino-acid chain: Tropomodulin-2 (351 aa).

Ser25 is modified (phosphoserine).

Belongs to the tropomodulin family. In terms of assembly, binds to the N-terminus of tropomyosin and to actin. As to expression, neuronal-tissue specific.

The protein localises to the cytoplasm. It is found in the cytoskeleton. In terms of biological role, blocks the elongation and depolymerization of the actin filaments at the pointed end. The Tmod/TM complex contributes to the formation of the short actin protofilament, which in turn defines the geometry of the membrane skeleton. The polypeptide is Tropomodulin-2 (TMOD2) (Homo sapiens (Human)).